The following is a 383-amino-acid chain: L-lactate dehydrogenase (383 aa).

The FMN hydroxy acid dehydrogenase domain occupies 1–380 (MIVSSTTDFR…NETILAERVP (380 aa)). Residue Tyr24 participates in substrate binding. Positions 106 and 127 each coordinate FMN. Tyr129 is a binding site for substrate. Thr155 contributes to the FMN binding site. Arg164 contacts substrate. Lys251 is an FMN binding site. Catalysis depends on His275, which acts as the Proton acceptor. Residue Arg278 coordinates substrate. An FMN-binding site is contributed by 306–330 (DGGVRSGLDVVRMLALGARGVLIGR).

This sequence belongs to the FMN-dependent alpha-hydroxy acid dehydrogenase family. The cofactor is FMN.

The protein resides in the cell inner membrane. It carries out the reaction (S)-lactate + A = pyruvate + AH2. Functionally, catalyzes the conversion of L-lactate to pyruvate. Is coupled to the respiratory chain. This chain is L-lactate dehydrogenase, found in Caulobacter vibrioides (strain ATCC 19089 / CIP 103742 / CB 15) (Caulobacter crescentus).